The chain runs to 245 residues: MFIGIVTLFPEMFKAITEFGVTGRAVKQNLLQVRCYNPRDFTHDKHKTVDDRPYGGGPGMLMMVQPLRDAIHSAKAEAGEGVKVIYLSPQGRKLEQSGVTELAQNKKLILVCGRYEGIDERLIQTEVDEEWSIGDYVLTGGELPAMTLIDAVARFIPGVLGKQASADEDSFAAGLLDCPHYTRPEELDGLTVPPVLMSGNHEQIRKWRLTQSLERTWLRRPELLEKLALTDEQKKILNQIKSETV.

S-adenosyl-L-methionine is bound by residues Gly-113 and 133 to 138 (IGDYVL).

The protein belongs to the RNA methyltransferase TrmD family. Homodimer.

The protein resides in the cytoplasm. The enzyme catalyses guanosine(37) in tRNA + S-adenosyl-L-methionine = N(1)-methylguanosine(37) in tRNA + S-adenosyl-L-homocysteine + H(+). In terms of biological role, specifically methylates guanosine-37 in various tRNAs. This chain is tRNA (guanine-N(1)-)-methyltransferase, found in Actinobacillus succinogenes (strain ATCC 55618 / DSM 22257 / CCUG 43843 / 130Z).